The primary structure comprises 128 residues: Sulfurtransferase TusD (128 aa).

The active-site Cysteine persulfide intermediate is the Cys-78.

Belongs to the DsrE/TusD family. As to quaternary structure, heterohexamer, formed by a dimer of trimers. The hexameric TusBCD complex contains 2 copies each of TusB, TusC and TusD. The TusBCD complex interacts with TusE.

It is found in the cytoplasm. Functionally, part of a sulfur-relay system required for 2-thiolation of 5-methylaminomethyl-2-thiouridine (mnm(5)s(2)U) at tRNA wobble positions. Accepts sulfur from TusA and transfers it in turn to TusE. In Escherichia coli O157:H7, this protein is Sulfurtransferase TusD.